Reading from the N-terminus, the 74-residue chain is Exodeoxyribonuclease 7 small subunit (74 aa).

It belongs to the XseB family. As to quaternary structure, heterooligomer composed of large and small subunits.

It localises to the cytoplasm. It catalyses the reaction Exonucleolytic cleavage in either 5'- to 3'- or 3'- to 5'-direction to yield nucleoside 5'-phosphates.. In terms of biological role, bidirectionally degrades single-stranded DNA into large acid-insoluble oligonucleotides, which are then degraded further into small acid-soluble oligonucleotides. This is Exodeoxyribonuclease 7 small subunit from Haemophilus ducreyi (strain 35000HP / ATCC 700724).